Reading from the N-terminus, the 318-residue chain is tRNA pseudouridine synthase B (318 aa).

Aspartate 47 acts as the Nucleophile in catalysis.

This sequence belongs to the pseudouridine synthase TruB family. Type 1 subfamily.

It catalyses the reaction uridine(55) in tRNA = pseudouridine(55) in tRNA. Its function is as follows. Responsible for synthesis of pseudouridine from uracil-55 in the psi GC loop of transfer RNAs. The protein is tRNA pseudouridine synthase B of Aliivibrio salmonicida (strain LFI1238) (Vibrio salmonicida (strain LFI1238)).